The sequence spans 247 residues: Ribonuclease 3 (247 aa).

The RNase III domain maps to 23-149 (HADLLERLGV…LLGAIFRQHG (127 aa)). Position 62 (E62) interacts with Mg(2+). The active site involves D66. D135 and E138 together coordinate Mg(2+). Residue E138 is part of the active site. The DRBM domain occupies 176–244 (DWKTTLQEEL…ARQAFLKLRE (69 aa)).

It belongs to the ribonuclease III family. Homodimer. Requires Mg(2+) as cofactor.

Its subcellular location is the cytoplasm. The catalysed reaction is Endonucleolytic cleavage to 5'-phosphomonoester.. Its function is as follows. Digests double-stranded RNA. Involved in the processing of primary rRNA transcript to yield the immediate precursors to the large and small rRNAs (23S and 16S). Processes some mRNAs, and tRNAs when they are encoded in the rRNA operon. Processes pre-crRNA and tracrRNA of type II CRISPR loci if present in the organism. This Corynebacterium efficiens (strain DSM 44549 / YS-314 / AJ 12310 / JCM 11189 / NBRC 100395) protein is Ribonuclease 3.